The sequence spans 328 residues: Formimidoylglutamase (328 aa).

Positions 133, 159, 161, 163, 253, and 255 each coordinate Mn(2+).

The protein belongs to the arginase family. Requires Mn(2+) as cofactor.

It catalyses the reaction N-formimidoyl-L-glutamate + H2O = formamide + L-glutamate. The protein operates within amino-acid degradation; L-histidine degradation into L-glutamate; L-glutamate from N-formimidoyl-L-glutamate (hydrolase route): step 1/1. In terms of biological role, catalyzes the conversion of N-formimidoyl-L-glutamate to L-glutamate and formamide. The chain is Formimidoylglutamase from Streptococcus pyogenes serotype M1.